Consider the following 396-residue polypeptide: Elongation factor Tu (396 aa).

The 196-residue stretch at Lys10 to Val205 folds into the tr-type G domain. The tract at residues Gly19–Thr26 is G1. Gly19–Thr26 provides a ligand contact to GTP. Thr26 provides a ligand contact to Mg(2+). Residues Gly62–Asn66 are G2. The tract at residues Asp83–Gly86 is G3. GTP is bound by residues Asp83–His87 and Asn138–Asp141. The interval Asn138 to Asp141 is G4. The segment at Ser175–Leu177 is G5.

This sequence belongs to the TRAFAC class translation factor GTPase superfamily. Classic translation factor GTPase family. EF-Tu/EF-1A subfamily. As to quaternary structure, monomer.

The protein resides in the cytoplasm. It catalyses the reaction GTP + H2O = GDP + phosphate + H(+). In terms of biological role, GTP hydrolase that promotes the GTP-dependent binding of aminoacyl-tRNA to the A-site of ribosomes during protein biosynthesis. The sequence is that of Elongation factor Tu from Mycobacterium bovis (strain ATCC BAA-935 / AF2122/97).